Consider the following 229-residue polypeptide: Heptaprenylglyceryl phosphate synthase (229 aa).

K12 contributes to the sn-glycerol 1-phosphate binding site. Mg(2+) is bound by residues D14 and S40. Residues 159 to 164 (YLEYSG), G189, and 209 to 210 (GN) contribute to the sn-glycerol 1-phosphate site.

Belongs to the GGGP/HepGP synthase family. Group I subfamily. In terms of assembly, homodimer. Mg(2+) serves as cofactor.

It carries out the reaction sn-glycerol 1-phosphate + all-trans-heptaprenyl diphosphate = 3-heptaprenyl-sn-glycero-1-phosphate + diphosphate. The protein operates within membrane lipid metabolism; glycerophospholipid metabolism. Functionally, prenyltransferase that catalyzes in vivo the transfer of the heptaprenyl moiety of heptaprenyl pyrophosphate (HepPP; 35 carbon atoms) to the C3 hydroxyl of sn-glycerol-1-phosphate (G1P), producing heptaprenylglyceryl phosphate (HepGP). This reaction is an ether-bond-formation step in the biosynthesis of archaea-type G1P-based membrane lipids found in Bacillales. The protein is Heptaprenylglyceryl phosphate synthase of Bacillus cereus (strain G9842).